Here is a 267-residue protein sequence, read N- to C-terminus: Translation initiation factor 2 subunit alpha (267 aa).

The 72-residue stretch at 12-83 (GEIVMATVER…KRKYANLSLR (72 aa)) folds into the S1 motif domain.

Belongs to the eIF-2-alpha family. As to quaternary structure, heterotrimer composed of an alpha, a beta and a gamma chain.

In terms of biological role, eIF-2 functions in the early steps of protein synthesis by forming a ternary complex with GTP and initiator tRNA. The sequence is that of Translation initiation factor 2 subunit alpha from Methanopyrus kandleri (strain AV19 / DSM 6324 / JCM 9639 / NBRC 100938).